Here is a 184-residue protein sequence, read N- to C-terminus: Ribosome-recycling factor (184 aa).

This sequence belongs to the RRF family.

Its subcellular location is the cytoplasm. Functionally, responsible for the release of ribosomes from messenger RNA at the termination of protein biosynthesis. May increase the efficiency of translation by recycling ribosomes from one round of translation to another. This chain is Ribosome-recycling factor, found in Clostridium botulinum (strain Okra / Type B1).